A 155-amino-acid chain; its full sequence is Small ribosomal subunit protein uS7 (155 aa).

This sequence belongs to the universal ribosomal protein uS7 family. Part of the 30S ribosomal subunit. Contacts proteins S9 and S11.

Functionally, one of the primary rRNA binding proteins, it binds directly to 16S rRNA where it nucleates assembly of the head domain of the 30S subunit. Is located at the subunit interface close to the decoding center, probably blocks exit of the E-site tRNA. The chain is Small ribosomal subunit protein uS7 from Pelodictyon phaeoclathratiforme (strain DSM 5477 / BU-1).